A 202-amino-acid chain; its full sequence is MGSVDAANGSGKKPTVIFVLGGPGSGKGTQCAYIVEHYGYTHLSAGDLLRAEIKSGSENGTMIQNMIKEGKIVPSEVTIKLLQKAIQENGNDKFLIDGFPRNEENRAAFEKVTEIEPKFVLFFDCPEEEMEKRLLGRNQGREDDNIETIRKRFKVFLESSLPVIHYYEAKGKVRKINAAKPIEAVFEEVKAIFSPEAEKVEA.

24–29 provides a ligand contact to ATP; the sequence is GSGKGT. The interval 44–73 is NMP; sequence SAGDLLRAEIKSGSENGTMIQNMIKEGKIV. A ribonucleoside 5'-phosphate-binding positions include arginine 50, 71-73, and 98-101; these read KIV and GFPR. Asparagine 105 is a CMP binding site. Positions 136-144 are LID; sequence GRNQGREDD. Arginine 137 lines the ATP pocket. Residues arginine 141 and arginine 152 each coordinate a ribonucleoside 5'-phosphate. Residue lysine 180 coordinates ATP.

In terms of assembly, monomer. Mg(2+) is required as a cofactor.

The protein resides in the cytoplasm. It localises to the nucleus. It carries out the reaction CMP + ATP = CDP + ADP. The catalysed reaction is dCMP + ATP = dCDP + ADP. The enzyme catalyses UMP + ATP = UDP + ADP. In terms of biological role, catalyzes the phosphorylation of pyrimidine nucleoside monophosphates at the expense of ATP. Plays an important role in de novo pyrimidine nucleotide biosynthesis. Has preference for UMP and CMP as phosphate acceptors. Does not act on dCMP and dUMP. The polypeptide is UMP-CMP kinase 3 (UMK3) (Arabidopsis thaliana (Mouse-ear cress)).